A 289-amino-acid polypeptide reads, in one-letter code: MANGYTYEDYQDTAKWLLSHTEQRPQVAVICGSGLGGLVNKLTQAQTFDYSEIPNFPESTVPGHAGRLVFGILNGRACVMMQGRFHMYEGYPFWKVTFPVRVFRLLGVETLVVTNAAGGLNPNFEVGDIMLIRDHINLPGFSGENPLRGPNEERFGVRFPAMSDAYDRDMRQKAHSTWKQMGEQRELQEGTYVMLGGPNFETVAECRLLRNLGADAVGMSTVPEVIVARHCGLRVFGFSLITNKVIMDYESQGKANHEEVLEAGKQAAQKLEQFVSLLMASIPVSGHTG.

An N-acetylmethionine modification is found at methionine 1. Residues serine 33, histidine 64, and 84–86 (RFH) contribute to the phosphate site. Residue tyrosine 88 coordinates a purine D-ribonucleoside. Position 116 (alanine 116) interacts with phosphate. Positions 201 and 219 each coordinate a purine D-ribonucleoside. Serine 220 is a phosphate binding site. Residue asparagine 243 participates in a purine D-ribonucleoside binding. Serine 251 is subject to Phosphoserine. Residue histidine 257 coordinates a purine D-ribonucleoside.

Belongs to the PNP/MTAP phosphorylase family. As to quaternary structure, homotrimer.

The protein localises to the cytoplasm. It catalyses the reaction inosine + phosphate = alpha-D-ribose 1-phosphate + hypoxanthine. The enzyme catalyses guanosine + phosphate = alpha-D-ribose 1-phosphate + guanine. It carries out the reaction 2'-deoxyguanosine + phosphate = 2-deoxy-alpha-D-ribose 1-phosphate + guanine. The catalysed reaction is 2'-deoxyinosine + phosphate = 2-deoxy-alpha-D-ribose 1-phosphate + hypoxanthine. It participates in purine metabolism; purine nucleoside salvage. Its function is as follows. Catalyzes the phosphorolytic breakdown of the N-glycosidic bond in the beta-(deoxy)ribonucleoside molecules, with the formation of the corresponding free purine bases and pentose-1-phosphate. Preferentially acts on 6-oxopurine nucleosides including inosine and guanosine. The polypeptide is Purine nucleoside phosphorylase (PNP) (Bos taurus (Bovine)).